The sequence spans 177 residues: Small ribosomal subunit protein uS5 (177 aa).

An S5 DRBM domain is found at 21–84; that stretch reads LKEKMISVNR…DEARRGMIKI (64 aa).

Belongs to the universal ribosomal protein uS5 family. In terms of assembly, part of the 30S ribosomal subunit. Contacts proteins S4 and S8.

Its function is as follows. With S4 and S12 plays an important role in translational accuracy. In terms of biological role, located at the back of the 30S subunit body where it stabilizes the conformation of the head with respect to the body. The polypeptide is Small ribosomal subunit protein uS5 (Nitrosomonas eutropha (strain DSM 101675 / C91 / Nm57)).